Reading from the N-terminus, the 89-residue chain is Putative regulatory protein CLH_1161 (89 aa).

Belongs to the RemA family.

The polypeptide is Putative regulatory protein CLH_1161 (Clostridium botulinum (strain Alaska E43 / Type E3)).